The primary structure comprises 427 residues: 3-phosphoshikimate 1-carboxyvinyltransferase (427 aa).

3-phosphoshikimate contacts are provided by K22, S23, and R27. K22 lines the phosphoenolpyruvate pocket. The phosphoenolpyruvate site is built by G96 and R124. 7 residues coordinate 3-phosphoshikimate: S169, S170, Q171, S197, D313, N336, and K340. Q171 is a binding site for phosphoenolpyruvate. D313 serves as the catalytic Proton acceptor. Residues R344, R386, and K411 each coordinate phosphoenolpyruvate.

It belongs to the EPSP synthase family. Monomer.

Its subcellular location is the cytoplasm. It catalyses the reaction 3-phosphoshikimate + phosphoenolpyruvate = 5-O-(1-carboxyvinyl)-3-phosphoshikimate + phosphate. It participates in metabolic intermediate biosynthesis; chorismate biosynthesis; chorismate from D-erythrose 4-phosphate and phosphoenolpyruvate: step 6/7. In terms of biological role, catalyzes the transfer of the enolpyruvyl moiety of phosphoenolpyruvate (PEP) to the 5-hydroxyl of shikimate-3-phosphate (S3P) to produce enolpyruvyl shikimate-3-phosphate and inorganic phosphate. This chain is 3-phosphoshikimate 1-carboxyvinyltransferase, found in Escherichia coli O127:H6 (strain E2348/69 / EPEC).